We begin with the raw amino-acid sequence, 319 residues long: Olfactory receptor 5B21 (319 aa).

At 1 to 26 (MTSMENITEVTEFILLGLTDDPNLQV) the chain is on the extracellular side. Asparagine 6 carries N-linked (GlcNAc...) asparagine glycosylation. The chain crosses the membrane as a helical span at residues 27-47 (PLLLIFLFIYLVTLIGNGGMM). The Cytoplasmic portion of the chain corresponds to 48–55 (VIIFSDSH). A helical transmembrane segment spans residues 56–76 (LHTPMYFFLSNLSFVDLGYSS). The Extracellular segment spans residues 77–100 (AVAPKMVAALQSGNKVISYNGCAA). Cysteine 98 and cysteine 190 are joined by a disulfide. A helical membrane pass occupies residues 101–121 (QFFFFVGFATVECYLLASMAY). The Cytoplasmic portion of the chain corresponds to 122–134 (DRHAAVCRPLHYT). The helical transmembrane segment at 135–155 (TTMTTGVCTILTIGSYTCGFL) threads the bilayer. At 156–197 (NASIHAADTFKLSFCGSNKINHFFCDIPPLLALACSSTHISK) the chain is on the extracellular side. Residues 198–218 (LVVFFVVGFNVFFTLLVIIIS) form a helical membrane-spanning segment. Over 219 to 238 (YFFIYIAIQNMKSSEGRKKA) the chain is Cytoplasmic. The helical transmembrane segment at 239-259 (FSTCASHLTAVSIFYGTIIFM) threads the bilayer. Topologically, residues 260-272 (YLQPSSGQSMDTD) are extracellular. Residues 273-293 (KIASVFYTVVIPMLNPLIYSL) form a helical membrane-spanning segment. At 294 to 319 (RNREVKSALWKILNRFYPASFSVSRK) the chain is on the cytoplasmic side.

The protein belongs to the G-protein coupled receptor 1 family.

It is found in the cell membrane. Its function is as follows. Odorant receptor. The sequence is that of Olfactory receptor 5B21 from Mus musculus (Mouse).